The sequence spans 537 residues: MGLLLLVLILTPLLAAYRHPDFPLLEKAQQLLQSTGSPYSTNCWLCTSSSTETPGTAYPASPREWTSIEAELHISYQWDPNLKGLMTPANSLLSTVKQDFPDIRQKPPIFGPIFTNINLMGKAPICVTAKRKNGTNVGTLPSTVCNVTFTVDPNQQTYQTYTHNQFRHQPRFPKPPNITFPQGTLLDKSTQFCQGRPSSCRTRNFWFRPADYNQCLQIPNLSSPAEWVLLDQTRNSLFWENKTKGANQSQTPCIQVLAGMTIATSYLGISPVSEFFGTSLTPLFHFHISTCLKTQGAFYICGQSIHQCLPTNWTGTCTIGYVTPDIFIAPGNLSLPIPIYGNSQLPRARRAIHFIPLLAGLGILAGTGTGIAGITKASFTYSQLSKEIAKNIDTMAKTLTTVQEQIDSLAAVVLQNRRGLDMLTAAQGGICLALDEKCCFWVNQSGKVQDNIRQLLNQASSLRERATQGWLNWEGTWKWFSWVLPFIGPLVSLLLLLLFGPCLLNLITQFVSSRLQAIKLQTNGAGCRPRNIQESPF.

A signal peptide spans Met1 to Ala15. The Extracellular portion of the chain corresponds to Ala16–Lys478. The CXXC motif lies at Cys43–Cys46. Cystine bridges form between Cys43/Cys46, Cys43/Cys439, and Cys431/Cys438. Residues Asn133, Asn146, Asn177, Asn220, Asn241, Asn247, Asn312, and Asn332 are each glycosylated (N-linked (GlcNAc...) asparagine). The fusion peptide stretch occupies residues Phe354–Ile374. Positions Leu414 to Ile430 match the CKS-17 motif. The short motif at Cys431–Cys439 is the CX6CC element. N-linked (GlcNAc...) asparagine glycosylation occurs at Asn443. The chain crosses the membrane as a helical span at residues Trp479–Phe499. Residues Gly500–Phe537 are Cytoplasmic-facing.

It belongs to the gamma type-C retroviral envelope protein family. HERV class-I FRD env subfamily. In terms of assembly, the surface and transmembrane proteins form a heterodimer. They are attached by non-covalent interactions or by a labile interchain disulfide bond. Post-translationally, specific enzymatic cleavages in vivo yield the mature SU and TM proteins. The CXXC motif is highly conserved across a broad range of retroviral envelope proteins. It is thought to participate in the formation of a labile disulfide bond possibly with the CX6CC motif present in the transmembrane protein.

It localises to the virion. Its subcellular location is the cell membrane. This endogenous retroviral envelope protein has retained its original fusogenic properties and participates in trophoblast fusion and the formation of a syncytium during placenta morphogenesis. The interaction with MFSD2A is apparently important for this process. Functionally, endogenous envelope proteins may have kept, lost or modified their original function during evolution but this one can still make pseudotypes with MLV, HIV-1 or SIV-1 virions and confer infectivity. Retroviral envelope proteins mediate receptor recognition and membrane fusion during early infection. The surface protein mediates receptor recognition, while the transmembrane protein anchors the envelope heterodimer to the viral membrane through one transmembrane domain. The other hydrophobic domain, called fusion peptide, mediates fusion of the viral membrane with the target cell membrane. The sequence is that of Syncytin-2 (ERVFRD-1) from Macaca fascicularis (Crab-eating macaque).